The following is a 140-amino-acid chain: Large ribosomal subunit protein uL11 (140 aa).

The protein belongs to the universal ribosomal protein uL11 family. As to quaternary structure, part of the ribosomal stalk of the 50S ribosomal subunit. Interacts with L10 and the large rRNA to form the base of the stalk. L10 forms an elongated spine to which L12 dimers bind in a sequential fashion forming a multimeric L10(L12)X complex. In terms of processing, one or more lysine residues are methylated.

Forms part of the ribosomal stalk which helps the ribosome interact with GTP-bound translation factors. This chain is Large ribosomal subunit protein uL11, found in Geotalea daltonii (strain DSM 22248 / JCM 15807 / FRC-32) (Geobacter daltonii).